A 387-amino-acid chain; its full sequence is S-adenosylmethionine synthase (387 aa).

ATP is bound at residue H16. D18 serves as a coordination point for Mg(2+). Residue E44 coordinates K(+). L-methionine contacts are provided by E57 and Q100. Residues 100-110 (QSPDIAQGVDR) are flexible loop. ATP is bound by residues 167–169 (DAK), 232–233 (RF), D241, 247–248 (RK), A264, and K268. L-methionine is bound at residue D241. K272 is an L-methionine binding site.

It belongs to the AdoMet synthase family. Homotetramer; dimer of dimers. The cofactor is Mg(2+). K(+) is required as a cofactor.

It localises to the cytoplasm. It carries out the reaction L-methionine + ATP + H2O = S-adenosyl-L-methionine + phosphate + diphosphate. Its pathway is amino-acid biosynthesis; S-adenosyl-L-methionine biosynthesis; S-adenosyl-L-methionine from L-methionine: step 1/1. In terms of biological role, catalyzes the formation of S-adenosylmethionine (AdoMet) from methionine and ATP. The overall synthetic reaction is composed of two sequential steps, AdoMet formation and the subsequent tripolyphosphate hydrolysis which occurs prior to release of AdoMet from the enzyme. In Cupriavidus pinatubonensis (strain JMP 134 / LMG 1197) (Cupriavidus necator (strain JMP 134)), this protein is S-adenosylmethionine synthase.